The following is a 672-amino-acid chain: Glycine--tRNA ligase beta subunit (672 aa).

Belongs to the class-II aminoacyl-tRNA synthetase family. Tetramer of two alpha and two beta subunits.

It is found in the cytoplasm. It carries out the reaction tRNA(Gly) + glycine + ATP = glycyl-tRNA(Gly) + AMP + diphosphate. This Thermotoga petrophila (strain ATCC BAA-488 / DSM 13995 / JCM 10881 / RKU-1) protein is Glycine--tRNA ligase beta subunit.